The chain runs to 1429 residues: Inactive rhomboid protein 1 (1429 aa).

Disordered regions lie at residues Met-1–Arg-36, Gly-560–Pro-579, and Thr-740–Ala-766. At Met-1–Thr-843 the chain is on the cytoplasmic side. Residues Ser-22–Ser-33 show a composition bias toward low complexity. 2 stretches are compositionally biased toward polar residues: residues Ala-564 to Asn-573 and Thr-740 to Gln-763. Residues Val-844–Gly-864 traverse the membrane as a helical segment. Residues Ser-865–Ser-1099 lie on the Lumenal side of the membrane. Residues Leu-1100 to Leu-1120 form a helical membrane-spanning segment. At Ala-1121–Arg-1131 the chain is on the cytoplasmic side. The helical transmembrane segment at Thr-1132–Pro-1152 threads the bilayer. Topologically, residues His-1153–Glu-1156 are lumenal. Residues Val-1157 to Met-1177 traverse the membrane as a helical segment. Over His-1178–His-1186 the chain is Cytoplasmic. Residues Ile-1187–Tyr-1207 traverse the membrane as a helical segment. Residues Gln-1208 to Asn-1210 lie on the Lumenal side of the membrane. The chain crosses the membrane as a helical span at residues Phe-1211–Phe-1231. Over Thr-1232–Leu-1245 the chain is Cytoplasmic. Residues Ile-1246–Ile-1266 form a helical membrane-spanning segment. Topologically, residues His-1267 to Leu-1429 are lumenal.

The protein belongs to the peptidase S54 family. As to expression, specifically expressed in the nervous system and in brain.

It is found in the endoplasmic reticulum membrane. In terms of biological role, rhomboid protease-like protein which has no protease activity but regulates the secretion of several ligands of the epidermal growth factor receptor. Indirectly activates the epidermal growth factor receptor signaling pathway and may thereby regulate sleep, cell survival, proliferation and migration. This chain is Inactive rhomboid protein 1 (rho-5), found in Drosophila melanogaster (Fruit fly).